We begin with the raw amino-acid sequence, 536 residues long: Interferon alpha/beta receptor 2 (536 aa).

The signal sequence occupies residues Met-1–Gly-26. Over Ile-27–Thr-246 the chain is Extracellular. Cystine bridges form between Cys-39–Cys-122 and Cys-85–Cys-93. Residues Asn-58, Asn-87, Asn-101, Asn-147, and Asn-191 are each glycosylated (N-linked (GlcNAc...) asparagine). Cys-210 and Cys-230 are disulfide-bonded. A helical transmembrane segment spans residues Ile-247–Leu-267. Residues Lys-268–Asn-536 are Cytoplasmic-facing. At Tyr-340 the chain carries Phosphotyrosine. 3 repeat units span residues Ser-358–Cys-362, Ser-363–Cys-367, and Ser-368–Cys-372. The tract at residues Ser-358–Cys-372 is 3 X 5 AA tandem repeats of S-L-E-D-C. A disordered region spans residues Leu-369–Arg-434. Over residues Thr-420–Glu-429 the composition is skewed to acidic residues. Residues Glu-432–Glu-456 are mediates interaction with STAT2 (and required for the recruitment of USP18). Ser-480 carries the post-translational modification Phosphoserine. The disordered stretch occupies residues Glu-487 to Gly-522. Tyr-525 carries the phosphotyrosine modification.

It belongs to the type II cytokine receptor family. In terms of assembly, heterodimer with IFNAR1; forming the receptor for type I interferon. Interacts with the transcriptional factors STAT1 and STAT2. Interacts with JAK1. Interacts with USP18; indirectly via STAT2, it negatively regulates the assembly of the ternary interferon-IFNAR1-IFNAR2 complex and therefore type I interferon signaling. In terms of processing, phosphorylated on tyrosine residues upon interferon binding. Phosphorylation at Tyr-340 or Tyr-525 are sufficient to mediate interferon dependent activation of STAT1, STAT2 and STAT3 leading to antiproliferative effects on many different cell types. As to expression, expressed in the endometrium. Expressed in all tissues examined except conceptus at day 15 of pregnancy.

It localises to the cell membrane. In terms of biological role, together with IFNAR1, forms the heterodimeric receptor for type I interferons (including interferons alpha, beta, epsilon, omega and kappa). Type I interferon binding activates the JAK-STAT signaling cascade, resulting in transcriptional activation or repression of interferon-regulated genes that encode the effectors of the interferon response. Mechanistically, type I interferon-binding brings the IFNAR1 and IFNAR2 subunits into close proximity with one another, driving their associated Janus kinases (JAKs) (TYK2 bound to IFNAR1 and JAK1 bound to IFNAR2) to cross-phosphorylate one another. The activated kinases phosphorylate specific tyrosine residues on the intracellular domains of IFNAR1 and IFNAR2, forming docking sites for the STAT transcription factors (STAT1, STAT2 and STAT). STAT proteins are then phosphorylated by the JAKs, promoting their translocation into the nucleus to regulate expression of interferon-regulated genes. The sequence is that of Interferon alpha/beta receptor 2 (IFNAR2) from Ovis aries (Sheep).